The following is a 395-amino-acid chain: MAQLETRTEPMVVNFGPHHPSMHGVLRLVVTLDGENVIDCEPVIGYLHRGMEKIAENRTNVMYVPYVSRMDYAAGMFYEAIVVNAPERLANIVVPKRASYIRVLMLELNRIANHLLWLGPFLADVGAQTPFFYIFREREMIYDLWEAATGQRLINNNFFRIGGVACDLPYGWLEKCIDFCDWFAPKIDEYEKLITNNPIFKKRIEGLGTIERDQAINWSLSGPMLRASGVSWDLRKVDSYECYDDFEWEIASEKEGDCYARYRVRVQEMRQSLKIIRQACEMIPGGPTENLEAKRMATEDKKSEIFGMDYQYVAKKVAPTFKIPNGELYTRLESGKGEIGVFIQGNNEVTPWRFKIRAADLNNLQILPHILKGAKIADIMAILGSIDVIMGSVDR.

The protein belongs to the complex I 49 kDa subunit family. NDH-1 can be composed of about 15 different subunits; different subcomplexes with different compositions have been identified which probably have different functions.

The protein localises to the cellular thylakoid membrane. It catalyses the reaction a plastoquinone + NADH + (n+1) H(+)(in) = a plastoquinol + NAD(+) + n H(+)(out). It carries out the reaction a plastoquinone + NADPH + (n+1) H(+)(in) = a plastoquinol + NADP(+) + n H(+)(out). In terms of biological role, NDH-1 shuttles electrons from an unknown electron donor, via FMN and iron-sulfur (Fe-S) centers, to quinones in the respiratory and/or the photosynthetic chain. The immediate electron acceptor for the enzyme in this species is believed to be plastoquinone. Couples the redox reaction to proton translocation, and thus conserves the redox energy in a proton gradient. Cyanobacterial NDH-1 also plays a role in inorganic carbon-concentration. The sequence is that of NAD(P)H-quinone oxidoreductase subunit H from Prochlorococcus marinus subsp. pastoris (strain CCMP1986 / NIES-2087 / MED4).